The following is a 147-amino-acid chain: SsrA-binding protein (147 aa).

Positions 124-147 are disordered; that stretch reads KKHDKRQDIKDRDWARKQARQDFS. Positions 128–147 are enriched in basic and acidic residues; it reads KRQDIKDRDWARKQARQDFS.

Belongs to the SmpB family.

The protein resides in the cytoplasm. Required for rescue of stalled ribosomes mediated by trans-translation. Binds to transfer-messenger RNA (tmRNA), required for stable association of tmRNA with ribosomes. tmRNA and SmpB together mimic tRNA shape, replacing the anticodon stem-loop with SmpB. tmRNA is encoded by the ssrA gene; the 2 termini fold to resemble tRNA(Ala) and it encodes a 'tag peptide', a short internal open reading frame. During trans-translation Ala-aminoacylated tmRNA acts like a tRNA, entering the A-site of stalled ribosomes, displacing the stalled mRNA. The ribosome then switches to translate the ORF on the tmRNA; the nascent peptide is terminated with the 'tag peptide' encoded by the tmRNA and targeted for degradation. The ribosome is freed to recommence translation, which seems to be the essential function of trans-translation. The sequence is that of SsrA-binding protein from Neorickettsia sennetsu (strain ATCC VR-367 / Miyayama) (Ehrlichia sennetsu).